The primary structure comprises 342 residues: Dihydroorotase (342 aa).

2 residues coordinate Zn(2+): His13 and His15. Substrate contacts are provided by residues 15-17 (HLR) and Asn41. The Zn(2+) site is built by Lys98, His135, and His173. Lys98 is subject to N6-carboxylysine. Residue His135 participates in substrate binding. Leu218 provides a ligand contact to substrate. Asp246 is a binding site for Zn(2+). Asp246 is an active-site residue. 2 residues coordinate substrate: His250 and Ala262.

This sequence belongs to the metallo-dependent hydrolases superfamily. DHOase family. Class II DHOase subfamily. As to quaternary structure, homodimer. Zn(2+) is required as a cofactor.

It carries out the reaction (S)-dihydroorotate + H2O = N-carbamoyl-L-aspartate + H(+). Its pathway is pyrimidine metabolism; UMP biosynthesis via de novo pathway; (S)-dihydroorotate from bicarbonate: step 3/3. Functionally, catalyzes the reversible cyclization of carbamoyl aspartate to dihydroorotate. The polypeptide is Dihydroorotase (Vibrio vulnificus (strain CMCP6)).